The sequence spans 756 residues: Serine/threonine-protein kinase DCLK2 (756 aa).

A disordered region spans residues 1–44 (MASTRSIELEHFEERDKRPRPGSRRGAPSSSGGSSISGPKGNGL). Residues 7 to 19 (IELEHFEERDKRP) are compositionally biased toward basic and acidic residues. Over residues 24–43 (RRGAPSSSGGSSISGPKGNG) the composition is skewed to low complexity. Residue Thr-61 is modified to Phosphothreonine. Doublecortin domains lie at 72–158 (KKAR…VDYT) and 196–279 (KLVT…AQDD). Composition is skewed to low complexity over residues 301 to 311 (KYSGSRSPGFS) and 323 to 346 (TPSS…SPGS). The tract at residues 301 to 375 (KYSGSRSPGF…GPELDRCLSP (75 aa)) is disordered. Positions 353-364 (ISAQGRSSSNVN) are enriched in polar residues. At Ser-361 the chain carries Phosphoserine. Positions 393-650 (YRIGKVIGDG…AGEILSHPWV (258 aa)) constitute a Protein kinase domain. ATP-binding positions include 399–407 (IGDGNFAVV) and Lys-422. The active-site Proton acceptor is the Asp-514. Residue Ser-646 is modified to Phosphoserine. The residue at position 665 (Thr-665) is a Phosphothreonine. The tract at residues 707–756 (QDSSRPSREQTSPVPPSAQEAPPPLESPRPPGPPATSGCDLAGTWRRHRD) is disordered. Residues 719–740 (PVPPSAQEAPPPLESPRPPGPP) show a composition bias toward pro residues.

It belongs to the protein kinase superfamily. CAMK Ser/Thr protein kinase family. CaMK subfamily. As to quaternary structure, binds to and stabilizes microtubules. Interacts with MAPK8IP1/JIP-1, MAPK8IP2/JIP-2, MAPK9/JNK2, PPP1R9B/NEURABIN-2 and actin. In terms of processing, autophosphorylated. Expressed in the central and peripheral nervous system including the brain, spinal cord, cranial and dorsal root ganglia and in the parasympathetic ganglia. Present in neurons, but not in glial cells, in most forebrain areas. Strong expression in the hippocampal CA1 pyramidal cell layer. Expressed in the photoreceptor sensory cilium complex and in eyes. Also detected in individual cells of the olfactory epithelium.

The protein resides in the cytoplasm. Its subcellular location is the cytoskeleton. The catalysed reaction is L-seryl-[protein] + ATP = O-phospho-L-seryl-[protein] + ADP + H(+). It catalyses the reaction L-threonyl-[protein] + ATP = O-phospho-L-threonyl-[protein] + ADP + H(+). Its function is as follows. Protein kinase with a significantly reduced Ca(2+)+/CAM affinity and dependence compared to other members of the CaMK family. May play a role in the down-regulation of CRE-dependent gene activation probably by phosphorylation of the CREB coactivator CRTC2/TORC2 and the resulting retention of TORC2 in the cytoplasm. The polypeptide is Serine/threonine-protein kinase DCLK2 (Dclk2) (Mus musculus (Mouse)).